Here is a 256-residue protein sequence, read N- to C-terminus: Type III pantothenate kinase (256 aa).

6-13 provides a ligand contact to ATP; the sequence is DIGNTHTV. Residues Tyr100 and 107-110 contribute to the substrate site; that span reads GADR. The Proton acceptor role is filled by Asp109. Asp129 is a binding site for K(+). Thr132 is an ATP binding site. Substrate is bound at residue Thr184.

The protein belongs to the type III pantothenate kinase family. In terms of assembly, homodimer. It depends on NH4(+) as a cofactor. The cofactor is K(+).

The protein localises to the cytoplasm. The catalysed reaction is (R)-pantothenate + ATP = (R)-4'-phosphopantothenate + ADP + H(+). It functions in the pathway cofactor biosynthesis; coenzyme A biosynthesis; CoA from (R)-pantothenate: step 1/5. Catalyzes the phosphorylation of pantothenate (Pan), the first step in CoA biosynthesis. The protein is Type III pantothenate kinase of Acidothermus cellulolyticus (strain ATCC 43068 / DSM 8971 / 11B).